The primary structure comprises 128 residues: Z-ring associated protein G (128 aa).

Residues 7 to 27 form a helical membrane-spanning segment; the sequence is EIWFSISIAFLIGTLCGVLVM. The stretch at 37–75 forms a coiled coil; it reads QIQLKSELASAEAKIEEQKQQLERHFEQSANLLENLAED. Residues 105-128 form a disordered region; sequence NHANGDEDNQPRDYSDGSSGLLKS. A compositionally biased stretch (basic and acidic residues) spans 107–119; that stretch reads ANGDEDNQPRDYS.

Belongs to the ZapG family. Homotetramer. In solution, is primarily monomeric but forms small amounts of stable tetramer and hexadecamer. The crystal structure of the cytosolic region shows a coiled-coil tetramer in the asymmetric unit that is very likely to be a physiologically relevant assembly of the protein.

The protein resides in the cell inner membrane. In terms of biological role, involved in cell division, cell envelope biogenesis and cell shape maintenance. This is Z-ring associated protein G from Haemophilus ducreyi (strain 35000HP / ATCC 700724).